A 399-amino-acid chain; its full sequence is Endo-1,4-beta-xylanase C (399 aa).

The first 20 residues, 1 to 20 (MFKFSASLAALAALVPFVAA), serve as a signal peptide directing secretion. The region spanning 21–56 (QSPEWGQCGGIGWTGPTTCVAGTTCVESNPYYSQCL) is the CBM1 domain. The region spanning 81 to 396 (SAKLHTLAKA…KPAFNGIAAG (316 aa)) is the GH10 domain. Glu212 functions as the Proton donor in the catalytic mechanism. The active-site Nucleophile is Glu318. An intrachain disulfide couples Cys346 to Cys352.

This sequence belongs to the glycosyl hydrolase 10 (cellulase F) family.

Its subcellular location is the secreted. It carries out the reaction Endohydrolysis of (1-&gt;4)-beta-D-xylosidic linkages in xylans.. It functions in the pathway glycan degradation; xylan degradation. Functionally, endo-1,4-beta-xylanase involved in the hydrolysis of xylan, a major structural heterogeneous polysaccharide found in plant biomass representing the second most abundant polysaccharide in the biosphere, after cellulose. The protein is Endo-1,4-beta-xylanase C (xynC) of Phanerodontia chrysosporium (White-rot fungus).